We begin with the raw amino-acid sequence, 395 residues long: Putative ankyrin repeat protein RF_0950 (395 aa).

7 ANK repeats span residues Tyr3–Thr32, Tyr36–Ala65, Ile69–Val98, Arg101–Gln130, Asn134–Leu166, Asn172–Ile201, and Ala205–Glu234. The Glutamine amidotransferase type-1 domain maps to Lys272–Lys395. The Nucleophile role is filled by Cys377.

This Rickettsia felis (strain ATCC VR-1525 / URRWXCal2) (Rickettsia azadi) protein is Putative ankyrin repeat protein RF_0950.